We begin with the raw amino-acid sequence, 191 residues long: Imidazoleglycerol-phosphate dehydratase (191 aa).

The protein belongs to the imidazoleglycerol-phosphate dehydratase family.

The protein localises to the cytoplasm. The catalysed reaction is D-erythro-1-(imidazol-4-yl)glycerol 3-phosphate = 3-(imidazol-4-yl)-2-oxopropyl phosphate + H2O. Its pathway is amino-acid biosynthesis; L-histidine biosynthesis; L-histidine from 5-phospho-alpha-D-ribose 1-diphosphate: step 6/9. The polypeptide is Imidazoleglycerol-phosphate dehydratase (Methanococcoides burtonii (strain DSM 6242 / NBRC 107633 / OCM 468 / ACE-M)).